The chain runs to 98 residues: HIG1 domain family member 1B (98 aa).

At 1-28 (MSANKGWWVPPEGEDNLSKKFLRKTRES) the chain is on the cytoplasmic side. The 94-residue stretch at 1 to 94 (MSANKGWWVP…YRDYIKRVSE (94 aa)) folds into the HIG1 domain. The chain crosses the membrane as a helical span at residues 29 to 46 (PLVPIGVAGCLVIAAYRI). At 47-60 (YRLKARGSTKLSIH) the chain is on the extracellular side. Residues 61–83 (LIHTRVAAQACAVGAIMLGAMYT) traverse the membrane as a helical segment. At 84-98 (MYRDYIKRVSEDAEK) the chain is on the cytoplasmic side.

Its subcellular location is the membrane. The polypeptide is HIG1 domain family member 1B (Higd1b) (Mus musculus (Mouse)).